Consider the following 149-residue polypeptide: Transcriptional repressor NrdR (149 aa).

The segment at 3-34 (CPFCGHLETQVVETRISEDAEFIRRRRQCGAC) is a zinc-finger region. Positions 49–139 (PSIVKKDGRR…VYRSFEDIDE (91 aa)) constitute an ATP-cone domain.

This sequence belongs to the NrdR family. Zn(2+) is required as a cofactor.

In terms of biological role, negatively regulates transcription of bacterial ribonucleotide reductase nrd genes and operons by binding to NrdR-boxes. This is Transcriptional repressor NrdR from Polaromonas naphthalenivorans (strain CJ2).